A 420-amino-acid chain; its full sequence is Napsin-A (420 aa).

Positions 1–25 (MSPPPLLQPLLLLLPLLNVEPSGAT) are cleaved as a signal peptide. Residues 26-63 (LIRIPLHRVQPGRRILNLLRGWREPAELPKLGAPSPGD) constitute a propeptide, activation peptide. The Peptidase A1 domain maps to 78–399 (YFGEIGLGTP…MKSSARVGLA (322 aa)). The N-linked (GlcNAc...) asparagine glycan is linked to Asn90. Asp96 is a catalytic residue. Cys109 and Cys116 form a disulfide bridge. Residue Asn133 is glycosylated (N-linked (GlcNAc...) asparagine). An intrachain disulfide couples Cys274 to Cys278. The active site involves Asp283. Cys317 and Cys354 are oxidised to a cystine. Asn336 carries N-linked (GlcNAc...) asparagine glycosylation.

Belongs to the peptidase A1 family. As to expression, expressed predominantly in adult lung (type II pneumocytes) and kidney and in fetal lung. Low levels in adult spleen and very low levels in peripheral blood leukocytes.

Its subcellular location is the secreted. May be involved in processing of pneumocyte surfactant precursors. The chain is Napsin-A (NAPSA) from Homo sapiens (Human).